A 60-amino-acid polypeptide reads, in one-letter code: MKSVCGVLIILVVLTTMLSISTFSTVGAEADCPISEAIKCVEKCNQKVEVCEPGVCKCSG.

An N-terminal signal peptide occupies residues 1–28 (MKSVCGVLIILVVLTTMLSISTFSTVGA). Cystine bridges form between cysteine 32–cysteine 51, cysteine 40–cysteine 56, and cysteine 44–cysteine 58.

It belongs to the short scorpion toxin superfamily. Potassium channel inhibitor family. Alpha-KTx 29 subfamily. In terms of tissue distribution, expressed by the venom gland.

Its subcellular location is the secreted. Its function is as follows. Weakly inhibits the Kv1.3/KCNA3 channel (1 uM of thetoxin inhibits currents by 13.2%) and Kv7.1/KCNQ1 channel (10 uM of the toxin inhibits currents by 27.7%). In Lychas mucronatus (Chinese swimming scorpion), this protein is Potassium channel toxin alpha-KTx 29.3.